The sequence spans 479 residues: 5-hydroxytryptamine receptor 2B (479 aa).

Topologically, residues 1–55 (MASSYKMSEQSTTSEHILQKTCDHLILTNRSGLETDSVAEEMKQTVEGQGHTVHW) are extracellular. N29 carries N-linked (GlcNAc...) asparagine glycosylation. Residues 56–78 (AALLILAVIIPTIGGNILVILAV) traverse the membrane as a helical segment. Residues 79-89 (ALEKRLQYATN) are Cytoplasmic-facing. Residues 90–112 (YFLMSLAIADLLVGLFVMPIALL) form a helical membrane-spanning segment. At 113 to 128 (TIMFEAIWPLPLALCP) the chain is on the extracellular side. A disulfide bridge connects residues C127 and C206. The chain crosses the membrane as a helical span at residues 129–150 (AWLFLDVLFSTASIMHLCAISL). D134 and T139 together coordinate ergotamine. The short motif at 151–153 (DRY) is the DRY motif; important for ligand-induced conformation changes element. The Cytoplasmic segment spans residues 151-170 (DRYIAIKKPIQANQCNSRAT). The helical transmembrane segment at 171–191 (AFIKITVVWLISIGIAIPVPI) threads the bilayer. The Extracellular segment spans residues 192-215 (KGIETDVINPHNVTCELTKDRFGS). L208 contributes to the ergotamine binding site. The [DE]RFG motif; may stabilize a conformation that preferentially activates signaling via beta-arrestin family members signature appears at 211–214 (DRFG). A helical transmembrane segment spans residues 216–238 (FMVFGSLAAFFAPLTIMVVTYFL). Topologically, residues 239-323 (TIHTLQKKAY…TISNEQRASK (85 aa)) are cytoplasmic. Residues 324–344 (ALGVVFFLFLLMWCPFFITNL) form a helical membrane-spanning segment. Over 345–359 (TLALCDSCNQTTLKT) the chain is Extracellular. A disulfide bridge connects residues C349 and C352. The chain crosses the membrane as a helical span at residues 360-381 (LLEIFVWIGYVSSGVNPLIYTL). The NPxxY motif; important for ligand-induced conformation changes and signaling signature appears at 375–379 (NPLIY). The Cytoplasmic segment spans residues 382–479 (FNKTFREAFG…DKAEEQVSYI (98 aa)). A lipid anchor (S-palmitoyl cysteine) is attached at C396. The PDZ-binding signature appears at 477–479 (SYI).

The protein belongs to the G-protein coupled receptor 1 family. In terms of assembly, interacts (via C-terminus) with MPDZ. As to expression, ubiquitous. Detected in intestine, heart, skeletal muscle, testis, urinary bladder, stomach, liver, lung, brain and kidney. Detected in osteoblasts. Detected in the raphe nucleus in the brain, in dorsal root ganglion neurons, the brain stem, cerebellum and spinal cord. Detected in interstitial cells of Cajal in the small intestine.

Its subcellular location is the cell membrane. It localises to the synapse. The protein localises to the synaptosome. Its function is as follows. G-protein coupled receptor for 5-hydroxytryptamine (serotonin). Also functions as a receptor for various ergot alkaloid derivatives and psychoactive substances. Ligand binding causes a conformation change that triggers signaling via guanine nucleotide-binding proteins (G proteins) and modulates the activity of downstream effectors. HTR2B is coupled to G(q)/G(11) G alpha proteins and activates phospholipase C-beta, releasing diacylglycerol (DAG) and inositol 1,4,5-trisphosphate (IP3) second messengers that modulate the activity of phosphatidylinositol 3-kinase and promote the release of Ca(2+) ions from intracellular stores, respectively. Beta-arrestin family members inhibit signaling via G proteins and mediate activation of alternative signaling pathways. Plays a role in the regulation of dopamine and 5-hydroxytryptamine release, 5-hydroxytryptamine uptake and in the regulation of extracellular dopamine and 5-hydroxytryptamine levels, and thereby affects neural activity. May play a role in the perception of pain. Plays a role in the regulation of behavior, including impulsive behavior. Required for normal proliferation of embryonic cardiac myocytes and normal heart development. Protects cardiomyocytes against apoptosis. Plays a role in the adaptation of pulmonary arteries to chronic hypoxia. Plays a role in vasoconstriction. Required for normal osteoblast function and proliferation, and for maintaining normal bone density. Required for normal proliferation of the interstitial cells of Cajal in the intestine. The sequence is that of 5-hydroxytryptamine receptor 2B (Htr2b) from Mus musculus (Mouse).